The following is a 247-amino-acid chain: Segregation and condensation protein A (247 aa).

This sequence belongs to the ScpA family. Component of a cohesin-like complex composed of ScpA, ScpB and the Smc homodimer, in which ScpA and ScpB bind to the head domain of Smc. The presence of the three proteins is required for the association of the complex with DNA.

The protein localises to the cytoplasm. Participates in chromosomal partition during cell division. May act via the formation of a condensin-like complex containing Smc and ScpB that pull DNA away from mid-cell into both cell halves. The protein is Segregation and condensation protein A of Lactobacillus johnsonii (strain CNCM I-12250 / La1 / NCC 533).